The primary structure comprises 247 residues: NifU-like scaffold protein (247 aa).

The protein belongs to the NifU family. In terms of assembly, homodimer.

It localises to the plastid. The protein resides in the apicoplast. It participates in cofactor biosynthesis; iron-sulfur cluster biosynthesis. In terms of biological role, binds and transfers [4Fe-4S] iron-sulfur clusters to target proteins. In Plasmodium falciparum (isolate 3D7), this protein is NifU-like scaffold protein.